A 42-amino-acid polypeptide reads, in one-letter code: Potassium channel toxin gamma-KTx 1.6 (42 aa).

Intrachain disulfides connect Cys5-Cys23, Cys11-Cys34, Cys20-Cys39, and Cys24-Cys41.

The protein belongs to the ergtoxin family. Gamma-KTx 1 subfamily. As to expression, expressed by the venom gland.

The protein resides in the secreted. Blocks Kv11/ERG potassium channels. This chain is Potassium channel toxin gamma-KTx 1.6, found in Centruroides exilicauda (Bark scorpion).